Reading from the N-terminus, the 230-residue chain is MAKLTKRAQMLREKVDTSKVYNLEDAVALLSEVSTVKFKESVEVSINLGVDPRKSDQVVRGATVMPNGTGKDARVAVFAQGAAADAAKEAGADVVGMEDLAEEVKKGNLDFDVVVAAPDAMRVVGQLGQILGPRGLMPNPKVGTVTPDVATAVKNAKAGQVRFRTDKNGIIHAAIGKVDFDASAIKGNLDALVGDLKRLKPSTSKGVYFKKITLSTTMGPGLTVDHSAYV.

This sequence belongs to the universal ribosomal protein uL1 family. Part of the 50S ribosomal subunit.

In terms of biological role, binds directly to 23S rRNA. The L1 stalk is quite mobile in the ribosome, and is involved in E site tRNA release. Its function is as follows. Protein L1 is also a translational repressor protein, it controls the translation of the L11 operon by binding to its mRNA. The polypeptide is Large ribosomal subunit protein uL1 (Chromohalobacter salexigens (strain ATCC BAA-138 / DSM 3043 / CIP 106854 / NCIMB 13768 / 1H11)).